Here is an 89-residue protein sequence, read N- to C-terminus: Co-chaperonin GroES (89 aa).

It belongs to the GroES chaperonin family. In terms of assembly, heptamer of 7 subunits arranged in a ring. Interacts with the chaperonin GroEL.

It is found in the cytoplasm. Its function is as follows. Together with the chaperonin GroEL, plays an essential role in assisting protein folding. The GroEL-GroES system forms a nano-cage that allows encapsulation of the non-native substrate proteins and provides a physical environment optimized to promote and accelerate protein folding. GroES binds to the apical surface of the GroEL ring, thereby capping the opening of the GroEL channel. The protein is Co-chaperonin GroES of Fervidobacterium nodosum (strain ATCC 35602 / DSM 5306 / Rt17-B1).